Here is a 1064-residue protein sequence, read N- to C-terminus: Serine/threonine protein kinase KIN1 (1064 aa).

Positions 1–113 (MDDYHVNTAF…SSQGMPKQFH (113 aa)) are disordered. Over residues 8–36 (TAFSMGRGNQQDDGNSESNSMHTQPSTMA) the composition is skewed to polar residues. A compositionally biased stretch (basic and acidic residues) spans 74 to 91 (AEQKERQVELEGKSRENA). Residues 93–108 (KPNTTSQSRVSSSQGM) are compositionally biased toward polar residues. One can recognise a Protein kinase domain in the interval 120 to 398 (WEFVETVGAG…LKQVVEHHWM (279 aa)). Residues 126–134 (VGAGSMGKV) and Lys149 each bind ATP. Asp269 serves as the catalytic Proton acceptor. Phosphoserine is present on Ser534. The segment at 549–621 (SEPEATLATK…SPTPQGNDYQ (73 aa)) is disordered. A compositionally biased stretch (polar residues) spans 557–571 (TKDTSVPFTPKNSDG). Position 593 is a phosphoserine (Ser593). The segment covering 598 to 608 (KSSDNQRREME) has biased composition (basic and acidic residues). The residue at position 646 (Ser646) is a Phosphoserine. Disordered stretches follow at residues 652–672 (TIEQ…QKTH), 694–714 (MNEP…FPAL), 762–797 (EGSD…HARR), 823–843 (LESS…QTND), and 958–1016 (HESI…GMTT). Positions 654–670 (EQTSVNSNNSINKPVQK) are enriched in polar residues. Ser764 carries the post-translational modification Phosphoserine. A compositionally biased stretch (basic residues) spans 779–794 (KGRKLHPSARAKSVGH). 3 stretches are compositionally biased toward polar residues: residues 832–843 (DSLGNVTSQTND), 963–989 (RQGS…SITE), and 998–1016 (GTSL…GMTT). Ser986 is modified (phosphoserine). In terms of domain architecture, KA1 spans 1015-1064 (TTTEKEPIKFEIHIVKVRIVGLAGVHFKKISGNTWLYKELASSILKELKL).

Belongs to the protein kinase superfamily. CAMK Ser/Thr protein kinase family. NIM1 subfamily. Interacts with SEC9 and SRO7. Autophosphorylated.

It localises to the cytoplasm. The protein localises to the cell membrane. The enzyme catalyses L-seryl-[protein] + ATP = O-phospho-L-seryl-[protein] + ADP + H(+). It catalyses the reaction L-threonyl-[protein] + ATP = O-phospho-L-threonyl-[protein] + ADP + H(+). Functionally, serine/threonine protein kinase involved in the regulation of exocytosis. Induces phosphorylation of SEC9 and its release from the plasma membrane to the cytosol. The sequence is that of Serine/threonine protein kinase KIN1 (KIN1) from Saccharomyces cerevisiae (strain ATCC 204508 / S288c) (Baker's yeast).